The primary structure comprises 451 residues: Phosphoglucosamine mutase (451 aa).

Catalysis depends on Ser-103, which acts as the Phosphoserine intermediate. Residues Ser-103, Asp-243, Asp-245, and Asp-247 each coordinate Mg(2+). Ser-103 is modified (phosphoserine).

It belongs to the phosphohexose mutase family. The cofactor is Mg(2+). In terms of processing, activated by phosphorylation.

It catalyses the reaction alpha-D-glucosamine 1-phosphate = D-glucosamine 6-phosphate. In terms of biological role, catalyzes the conversion of glucosamine-6-phosphate to glucosamine-1-phosphate. This is Phosphoglucosamine mutase from Levilactobacillus brevis (strain ATCC 367 / BCRC 12310 / CIP 105137 / JCM 1170 / LMG 11437 / NCIMB 947 / NCTC 947) (Lactobacillus brevis).